A 327-amino-acid polypeptide reads, in one-letter code: Phenylalanine--tRNA ligase alpha subunit (327 aa).

E252 contributes to the Mg(2+) binding site.

It belongs to the class-II aminoacyl-tRNA synthetase family. Phe-tRNA synthetase alpha subunit type 1 subfamily. As to quaternary structure, tetramer of two alpha and two beta subunits. Mg(2+) serves as cofactor.

The protein resides in the cytoplasm. It carries out the reaction tRNA(Phe) + L-phenylalanine + ATP = L-phenylalanyl-tRNA(Phe) + AMP + diphosphate + H(+). This is Phenylalanine--tRNA ligase alpha subunit from Shigella dysenteriae serotype 1 (strain Sd197).